Consider the following 260-residue polypeptide: Phosphatidate cytidylyltransferase (260 aa).

The next 7 membrane-spanning stretches (helical) occupy residues 9–29 (IIAL…LMLF), 46–66 (MIKL…IIML), 70–90 (AGDW…FILL), 102–122 (FMDA…FMYF), 130–150 (LHYI…AYIF), 172–192 (FIGG…FVDF), and 196–216 (IWLL…GDLV).

This sequence belongs to the CDS family.

The protein resides in the cell membrane. It carries out the reaction a 1,2-diacyl-sn-glycero-3-phosphate + CTP + H(+) = a CDP-1,2-diacyl-sn-glycerol + diphosphate. It functions in the pathway phospholipid metabolism; CDP-diacylglycerol biosynthesis; CDP-diacylglycerol from sn-glycerol 3-phosphate: step 3/3. The polypeptide is Phosphatidate cytidylyltransferase (cdsA) (Staphylococcus haemolyticus (strain JCSC1435)).